Here is a 482-residue protein sequence, read N- to C-terminus: tRNA sulfurtransferase (482 aa).

Positions 61–165 constitute a THUMP domain; the sequence is DVTLAVLTQT…NDKLNLIIAR (105 aa). ATP is bound by residues 183-184, lysine 265, glycine 287, and glutamine 296; that span reads LI. A disulfide bond links cysteine 344 and cysteine 456. Residues 404 to 482 enclose the Rhodanese domain; sequence LGSDVVVLDI…GYKNVKVYRP (79 aa). Catalysis depends on cysteine 456, which acts as the Cysteine persulfide intermediate.

It belongs to the ThiI family.

Its subcellular location is the cytoplasm. The enzyme catalyses [ThiI sulfur-carrier protein]-S-sulfanyl-L-cysteine + a uridine in tRNA + 2 reduced [2Fe-2S]-[ferredoxin] + ATP + H(+) = [ThiI sulfur-carrier protein]-L-cysteine + a 4-thiouridine in tRNA + 2 oxidized [2Fe-2S]-[ferredoxin] + AMP + diphosphate. The catalysed reaction is [ThiS sulfur-carrier protein]-C-terminal Gly-Gly-AMP + S-sulfanyl-L-cysteinyl-[cysteine desulfurase] + AH2 = [ThiS sulfur-carrier protein]-C-terminal-Gly-aminoethanethioate + L-cysteinyl-[cysteine desulfurase] + A + AMP + 2 H(+). It functions in the pathway cofactor biosynthesis; thiamine diphosphate biosynthesis. Its function is as follows. Catalyzes the ATP-dependent transfer of a sulfur to tRNA to produce 4-thiouridine in position 8 of tRNAs, which functions as a near-UV photosensor. Also catalyzes the transfer of sulfur to the sulfur carrier protein ThiS, forming ThiS-thiocarboxylate. This is a step in the synthesis of thiazole, in the thiamine biosynthesis pathway. The sulfur is donated as persulfide by IscS. In Aliivibrio fischeri (strain ATCC 700601 / ES114) (Vibrio fischeri), this protein is tRNA sulfurtransferase.